The primary structure comprises 448 residues: MLIQRGGLKVVAGLGISGVSAVNFLHEQGYRVAVTDSRETPPGHDQIPQDVQTSFGQLDTELLLQAEEIILSPGLAPQLPEIQQAIAQGIPVIGDIQVLRRATQVPIVAITGSNAKSTVTTLFGQMAKDAGKRVAVGGNLGRPGLDLLKDEPELLVLELSSFQLETTSHLNAEVAVILNMSEDHLDRHGDMLGYHQAKHRIFQGVKKVVYNRDDSLTRPLVPDSTPMQSFGLNAPDIKQYGVLREDDGTMWLARGRTRLIKSSELYIQGTHNIANALACLALGEAIGLPVESMLETLKQFKGLEHRCEYVKTVNDVRYYNDSKGTNVGATLAAIDGLGAAIEPKQGKVIVILGGQGKGQDFSLLRQSVEKYVKAAILIGEDAQQIEQALTETTQLVHASTLKDAVTQAQQYAQPEDVVLLSPACASFDMFKGYPDRGHQFVACVDALV.

Position 112–118 (Gly112–Thr118) interacts with ATP.

The protein belongs to the MurCDEF family.

It localises to the cytoplasm. The enzyme catalyses UDP-N-acetyl-alpha-D-muramoyl-L-alanine + D-glutamate + ATP = UDP-N-acetyl-alpha-D-muramoyl-L-alanyl-D-glutamate + ADP + phosphate + H(+). It functions in the pathway cell wall biogenesis; peptidoglycan biosynthesis. Cell wall formation. Catalyzes the addition of glutamate to the nucleotide precursor UDP-N-acetylmuramoyl-L-alanine (UMA). This is UDP-N-acetylmuramoylalanine--D-glutamate ligase from Acinetobacter baylyi (strain ATCC 33305 / BD413 / ADP1).